The chain runs to 108 residues: Putative disulfide oxidoreductase YuzD (108 aa).

Residues C16 and C19 are joined by a disulfide bond.

The polypeptide is Putative disulfide oxidoreductase YuzD (yuzD) (Bacillus subtilis (strain 168)).